Consider the following 754-residue polypeptide: Peptidyl-prolyl cis-trans isomerase G (754 aa).

The PPIase cyclophilin-type domain occupies 11–176 (FFDIAINNQP…AEVRILSCGE (166 aa)). Basic residues predominate over residues 182 to 193 (KVKKEEKKRHKS). The tract at residues 182–754 (KVKKEEKKRH…SPGTDEDKSG (573 aa)) is disordered. Over residues 194-216 (SSSSSSSSSDSDSSSDSQSSSDS) the composition is skewed to low complexity. The span at 228 to 253 (KKRKKKHRKNSRKHKKEKKKRKKSKK) shows a compositional bias: basic residues. Phosphoserine occurs at positions 254, 256, 257, 259, and 290. Positions 292–310 (PKADEKERKNREREREREC) are enriched in basic and acidic residues. Residue serine 315 is modified to Phosphoserine. Over residues 329–347 (SGRKIKGRGPRRYRTPSRS) the composition is skewed to basic residues. Composition is skewed to basic and acidic residues over residues 348 to 368 (RSRD…EMQR) and 379 to 449 (RWIK…DKYK). At serine 356 the chain carries Phosphoserine. Position 358 is a phosphothreonine (threonine 358). The residue at position 386 (serine 386) is a Phosphoserine. Lysine 392 is covalently cross-linked (Glycyl lysine isopeptide (Lys-Gly) (interchain with G-Cter in SUMO2)). Phosphoserine is present on residues serine 397, serine 413, and serine 415. Basic residues predominate over residues 450–462 (NKVKKRAKSKSRS). Basic and acidic residues-rich tracts occupy residues 463-553 (KSKE…DITK) and 578-599 (RTHD…QEYR). Residues 616–627 (SRSKDRRRRRRD) show a composition bias toward basic residues. Residues 628–686 (SRSSEREESQSRNKDKYRNQESKSSHRKENSESEKRMYSKSRDHNSSNNSREKKADRDQ) show a composition bias toward basic and acidic residues. A phosphoserine mark is found at serine 687 and serine 690. Positions 687 to 698 (SPFSKIKQSSQD) are enriched in polar residues. Lysine 693 participates in a covalent cross-link: Glycyl lysine isopeptide (Lys-Gly) (interchain with G-Cter in SUMO2). Residues serine 696, serine 744, and serine 745 each carry the phosphoserine modification. A compositionally biased stretch (basic and acidic residues) spans 707-754 (KNKEDEKIRSSVEKENQKSKGQENDHVHEKNKKFDHESSPGTDEDKSG). Threonine 748 is modified (phosphothreonine). At serine 753 the chain carries Phosphoserine.

In terms of assembly, interacts with CLK1, PNN and with the phosphorylated C-terminal domain of RNA polymerase II. Ubiquitous.

It is found in the nucleus matrix. It localises to the nucleus speckle. The catalysed reaction is [protein]-peptidylproline (omega=180) = [protein]-peptidylproline (omega=0). Inhibited by cyclosporin A (CsA). In terms of biological role, PPIase that catalyzes the cis-trans isomerization of proline imidic peptide bonds in oligopeptides and may therefore assist protein folding. May be implicated in the folding, transport, and assembly of proteins. May play an important role in the regulation of pre-mRNA splicing. The sequence is that of Peptidyl-prolyl cis-trans isomerase G (PPIG) from Homo sapiens (Human).